The primary structure comprises 250 residues: Ino eighty subunit 3 (250 aa).

The segment at 29–70 (PDFLEKDPHHKKFHNADGLNQQGSSTPSTATDANAASTASTH) is disordered. Low complexity predominate over residues 52–70 (SSTPSTATDANAASTASTH). 2 positions are modified to phosphoserine: Ser-157 and Ser-211.

As to quaternary structure, component of the chromatin-remodeling INO80 complex, at least composed of ARP4, ARP5, ARP8, RVB1, RVB2, TAF14, NHP10, IES1, IES3, IES4, IES6, ACT1, IES2, IES5 and INO80.

The protein resides in the nucleus. In terms of biological role, probably involved in transcription regulation via its interaction with the INO80 complex, a chromatin-remodeling complex. The chain is Ino eighty subunit 3 (IES3) from Saccharomyces cerevisiae (strain ATCC 204508 / S288c) (Baker's yeast).